The primary structure comprises 320 residues: Acetyl-coenzyme A carboxylase carboxyl transferase subunit alpha (320 aa).

Residues 42-295 form the CoA carboxyltransferase C-terminal domain; the sequence is IGDKAAQALK…GDAIAEAFND (254 aa).

Belongs to the AccA family. Acetyl-CoA carboxylase is a heterohexamer composed of biotin carboxyl carrier protein (AccB), biotin carboxylase (AccC) and two subunits each of ACCase subunit alpha (AccA) and ACCase subunit beta (AccD).

Its subcellular location is the cytoplasm. The enzyme catalyses N(6)-carboxybiotinyl-L-lysyl-[protein] + acetyl-CoA = N(6)-biotinyl-L-lysyl-[protein] + malonyl-CoA. The protein operates within lipid metabolism; malonyl-CoA biosynthesis; malonyl-CoA from acetyl-CoA: step 1/1. Functionally, component of the acetyl coenzyme A carboxylase (ACC) complex. First, biotin carboxylase catalyzes the carboxylation of biotin on its carrier protein (BCCP) and then the CO(2) group is transferred by the carboxyltransferase to acetyl-CoA to form malonyl-CoA. The protein is Acetyl-coenzyme A carboxylase carboxyl transferase subunit alpha of Nitrobacter hamburgensis (strain DSM 10229 / NCIMB 13809 / X14).